The sequence spans 600 residues: Single-strand DNA endonuclease 1 (600 aa).

Residues 1 to 97 (MGVKYLWDVL…KRRLKARFEI (97 aa)) form an N-domain region. The XPG-N domain stretch occupies residues 2-97 (GVKYLWDVLE…KRRLKARFEI (96 aa)). Positions 30, 76, 142, 144, 163, 165, and 215 each coordinate Mg(2+). Residues 130–215 (STLGILCLDG…IALALLLGSD (86 aa)) form an XPG-I domain region. I-domain regions lie at residues 130-218 (STLG…DYSQ) and 130-219 (STLG…YSQG). The interval 215–353 (DYSQGVRGLR…ILPKVAERNL (139 aa)) is 5'-3' exonuclease domain. Positions 433–458 (MAAKKKKPKPKQKQKETSSPTKSSSL) are disordered. The segment covering 435 to 444 (AKKKKPKPKQ) has biased composition (basic residues).

This sequence belongs to the XPG/RAD2 endonuclease family. GEN subfamily. Requires Mg(2+) as cofactor.

Its subcellular location is the nucleus. Functionally, endonuclease which cleaves flap structures at the junction between single-stranded DNA and double-stranded DNA with a specific cleavage site in the 5' overhang strand exactly one nucleotide 3' of the branch point. Structure- and sequence-specific nuclease that resolves holliday junctions (HJs) by symmetrically oriented incisions in two opposing strands near the junction point, thus leading to ligatable products; HJs are physical links between homologous DNA molecules that arise as central intermediary structures during homologous recombination and repair in meiotic and somatic cells. Structure-specific nuclease with 5'-flap endonuclease activity, preferentially cleaving static flaps 5' overhang strand exactly one nucleotide in the 3' direction of the branch point and, to lower extent, on the two neighboring positions. Also able to cleave double-stranded flap strand 1 one nucleotide in the 3' direction of the branch point. Together with MUS81, essential for the resolution of toxic replication structures to ensure genome stability, and to maintain telomere integrity and replication. The protein is Single-strand DNA endonuclease 1 of Arabidopsis thaliana (Mouse-ear cress).